Here is a 220-residue protein sequence, read N- to C-terminus: Inner membrane protein YqjA (220 aa).

Residues 1-27 are Periplasmic-facing; the sequence is MELLTQLLQALWAQDFETLANPSMIGM. The helical transmembrane segment at 28-48 threads the bilayer; that stretch reads LYFVLFVILFLENGLLPAAFL. Topologically, residues 49–52 are cytoplasmic; the sequence is PGDS. A run of 2 helical transmembrane segments spans residues 53 to 73 and 74 to 94; these read LLVLVGVLIAKGAMGYPQTIL and LLTVAASLGCWVSYIQGRWLG. Residues 95–154 lie on the Cytoplasmic side of the membrane; sequence NTRTVQNWLSHLPAHYHQRAHHLFHKHGLSALLIGRFIAFVRTLLPTIAGLSGLNNARFQ. The helical transmembrane segment at 155–175 threads the bilayer; it reads FFNWMSGLLWVLILTTLGYML. Topologically, residues 176–191 are periplasmic; sequence GKTPVFLKYEDQLMSC. The helical transmembrane segment at 192-212 threads the bilayer; that stretch reads LMLLPVVLLVFGLAGSLVVLW. Topologically, residues 213–220 are cytoplasmic; it reads KKKYGNRG.

Belongs to the DedA family.

It is found in the cell inner membrane. Functionally, may be a membrane transporter required for proton motive force (PMF)-dependent drug efflux. Required, with YghB, for the proper export of certain periplasmic amidases and, possibly, other Tat substrates. May play a role in determining membrane lipid composition. The chain is Inner membrane protein YqjA (yqjA) from Escherichia coli (strain K12).